Consider the following 213-residue polypeptide: Probable nicotinate-nucleotide adenylyltransferase (213 aa).

Belongs to the NadD family.

The enzyme catalyses nicotinate beta-D-ribonucleotide + ATP + H(+) = deamido-NAD(+) + diphosphate. The protein operates within cofactor biosynthesis; NAD(+) biosynthesis; deamido-NAD(+) from nicotinate D-ribonucleotide: step 1/1. In terms of biological role, catalyzes the reversible adenylation of nicotinate mononucleotide (NaMN) to nicotinic acid adenine dinucleotide (NaAD). This is Probable nicotinate-nucleotide adenylyltransferase from Ruegeria pomeroyi (strain ATCC 700808 / DSM 15171 / DSS-3) (Silicibacter pomeroyi).